Consider the following 188-residue polypeptide: Elongation factor P (188 aa).

Belongs to the elongation factor P family.

The protein resides in the cytoplasm. It functions in the pathway protein biosynthesis; polypeptide chain elongation. Involved in peptide bond synthesis. Stimulates efficient translation and peptide-bond synthesis on native or reconstituted 70S ribosomes in vitro. Probably functions indirectly by altering the affinity of the ribosome for aminoacyl-tRNA, thus increasing their reactivity as acceptors for peptidyl transferase. This chain is Elongation factor P, found in Anaplasma marginale (strain Florida).